Here is a 585-residue protein sequence, read N- to C-terminus: MTKSVKKNIKNEISIIVANLALSKNIKLDKININIQKPPKSDLGDISILIFELSKTLELPIATISEEIIKTLKSKYEIKAMGPYLNIKIPRKEYINNTIQMVNAQKDSYGTSKYLDNKKIILEFSSPNTNKPLHVGHLRNDAIGESLSRILKAVGAKITKINLINDRGVHICKSMLAYKKFGNCITPEKAFKKGDHLIGEFYVEYNKYSQENENAEKEIQDLLLKWEQKDKNTIELWEKLNKWAIEGIKETYKTTNISFDKIYLESEIFEIGKNVVLEGLEKGFCYKREDGAICIDLPSDSDEKAEAKAKQKVLIRSNGTSIYLTQDLGNIAIRTKEFNFDEMIYVVGSEQIQHFKNLFFVSEKLGISKNKQLIHLSHGMVNLIDGKMKSREGNVIDGDNLILELIESIMPEITQKIDNKENAKKNALNIALGAIHYYLLKSAVHKDIVFNKKESLSFTGNSGPYIQYVGARINSILEKYNALSIPIIKKINFELLKHEKEWEIIKIISELEENIIKAAKDLNPSILTNYSYSLAKHFSAYYQEVKVIDINNTDLTAARIEFLKTILQTIKNCMHLLNIPYMLKM.

The 'HIGH' region signature appears at 127–137 (PNTNKPLHVGH).

It belongs to the class-I aminoacyl-tRNA synthetase family. As to quaternary structure, monomer.

It localises to the cytoplasm. It catalyses the reaction tRNA(Arg) + L-arginine + ATP = L-arginyl-tRNA(Arg) + AMP + diphosphate. This chain is Arginine--tRNA ligase, found in Borrelia garinii subsp. bavariensis (strain ATCC BAA-2496 / DSM 23469 / PBi) (Borreliella bavariensis).